A 571-amino-acid polypeptide reads, in one-letter code: Urease subunit alpha (571 aa).

One can recognise a Urease domain in the interval 129 to 571 (GGIDTHIHFI…LPMAQRYFLF (443 aa)). The Ni(2+) site is built by His134, His136, and Lys217. An N6-carboxylysine modification is found at Lys217. Position 219 (His219) interacts with substrate. His246 and His272 together coordinate Ni(2+). The active-site Proton donor is His320. Asp360 contacts Ni(2+).

This sequence belongs to the metallo-dependent hydrolases superfamily. Urease alpha subunit family. Heterotrimer of UreA (gamma), UreB (beta) and UreC (alpha) subunits. Three heterotrimers associate to form the active enzyme. Ni cation serves as cofactor. In terms of processing, carboxylation allows a single lysine to coordinate two nickel ions.

It is found in the cytoplasm. It catalyses the reaction urea + 2 H2O + H(+) = hydrogencarbonate + 2 NH4(+). It functions in the pathway nitrogen metabolism; urea degradation; CO(2) and NH(3) from urea (urease route): step 1/1. In Cupriavidus pinatubonensis (strain JMP 134 / LMG 1197) (Cupriavidus necator (strain JMP 134)), this protein is Urease subunit alpha.